We begin with the raw amino-acid sequence, 207 residues long: Urease accessory protein UreG (207 aa).

14–21 (GPVGSGKT) is a binding site for GTP.

This sequence belongs to the SIMIBI class G3E GTPase family. UreG subfamily. In terms of assembly, homodimer. UreD, UreF and UreG form a complex that acts as a GTP-hydrolysis-dependent molecular chaperone, activating the urease apoprotein by helping to assemble the nickel containing metallocenter of UreC. The UreE protein probably delivers the nickel.

It is found in the cytoplasm. In terms of biological role, facilitates the functional incorporation of the urease nickel metallocenter. This process requires GTP hydrolysis, probably effectuated by UreG. In Pseudomonas putida (strain GB-1), this protein is Urease accessory protein UreG.